Reading from the N-terminus, the 78-residue chain is D-alanyl carrier protein (78 aa).

One can recognise a Carrier domain in the interval 1–78; the sequence is MEFRDQVLDL…KIVAVLEELR (78 aa). S36 is modified (O-(pantetheine 4'-phosphoryl)serine).

Belongs to the DltC family. Post-translationally, 4'-phosphopantetheine is transferred from CoA to a specific serine of apo-DCP.

It is found in the cytoplasm. Its pathway is cell wall biogenesis; lipoteichoic acid biosynthesis. In terms of biological role, carrier protein involved in the D-alanylation of lipoteichoic acid (LTA). The loading of thioester-linked D-alanine onto DltC is catalyzed by D-alanine--D-alanyl carrier protein ligase DltA. The DltC-carried D-alanyl group is further transferred to cell membrane phosphatidylglycerol (PG) by forming an ester bond, probably catalyzed by DltD. D-alanylation of LTA plays an important role in modulating the properties of the cell wall in Gram-positive bacteria, influencing the net charge of the cell wall. This chain is D-alanyl carrier protein, found in Staphylococcus saprophyticus subsp. saprophyticus (strain ATCC 15305 / DSM 20229 / NCIMB 8711 / NCTC 7292 / S-41).